The following is a 402-amino-acid chain: Aminotransferase-like protein FGM3 (402 aa).

Pyridoxal 5'-phosphate is bound by residues 137–138, Asp-218, and 282–283; these read TI and FG.

Belongs to the class-V pyridoxal-phosphate-dependent aminotransferase family. Csd subfamily.

In terms of biological role, aminotransferase-like protein; part of the Fg3_54/C64 gene cluster that mediates the biosynthesis of the octapeptide fusaoctaxin A, a virulence factor that is required for cell-to-cell invasiveness of plant host. The 2 nonribosomal peptide synthetases NRPS9 and NRPS5 form an assembly line which likely utilizes GABA as a starter unit (loaded on the unique module M1 of NRPS9) and sequentially incorporates seven extender units composed of the residues L-Ala, L-allo-Ile, L-Ser, L-Val, L-Ser, L-Leu and L-Leu, respectively. During the process, each of the residues that are tethered on modules M3-M7 of NRPS5 containing an E domain can undergo an epimerization reaction to produce a D-configuration before the transpeptidation reaction occurs. The elongation of the peptidyl chain might be terminated by module M8-mediated L-Leu incorporation, followed by R domain-catalyzed 4 electron reduction to release the resulting octapeptide from the assembly line as an alcohol. Fusaoctaxin A is cleaved by the cluster specific ABC transporter FGM5 to the pentapeptide fusapentaxin A and the tripeptide fusatrixin A. The other enzymes from the cluster, FGM1, FGM2, FGM3 and FGM9 seem not to be involved in the biosynthesis of fusaoctaxin A and their functions have still to be determined. This Gibberella zeae (strain ATCC MYA-4620 / CBS 123657 / FGSC 9075 / NRRL 31084 / PH-1) (Wheat head blight fungus) protein is Aminotransferase-like protein FGM3.